The chain runs to 274 residues: Ribosomal RNA small subunit methyltransferase A (274 aa).

His-15, Leu-17, Gly-42, Glu-64, Asp-89, and Asn-109 together coordinate S-adenosyl-L-methionine.

It belongs to the class I-like SAM-binding methyltransferase superfamily. rRNA adenine N(6)-methyltransferase family. RsmA subfamily.

The protein localises to the cytoplasm. The enzyme catalyses adenosine(1518)/adenosine(1519) in 16S rRNA + 4 S-adenosyl-L-methionine = N(6)-dimethyladenosine(1518)/N(6)-dimethyladenosine(1519) in 16S rRNA + 4 S-adenosyl-L-homocysteine + 4 H(+). In terms of biological role, specifically dimethylates two adjacent adenosines (A1518 and A1519) in the loop of a conserved hairpin near the 3'-end of 16S rRNA in the 30S particle. May play a critical role in biogenesis of 30S subunits. The sequence is that of Ribosomal RNA small subunit methyltransferase A from Synechococcus sp. (strain CC9902).